The primary structure comprises 470 residues: Protein ASPARTIC PROTEASE IN GUARD CELL 2 (470 aa).

Positions 1-19 (MLLPLFFFFLHLHLHLSSS) are cleaved as a signal peptide. One can recognise a Peptidase A1 domain in the interval 131 to 466 (YFVRIGVGSP…DGANGFVGFG (336 aa)). Aspartate 149 is an active-site residue. Intrachain disulfides connect cysteine 159-cysteine 162, cysteine 165-cysteine 239, cysteine 186-cysteine 204, cysteine 191-cysteine 199, cysteine 278-cysteine 470, and cysteine 389-cysteine 431. Residue aspartate 350 is part of the active site.

The protein belongs to the peptidase A1 family.

Its function is as follows. Aspartic protease that may be involved in drought avoidance through abscisic acid signaling. This is Protein ASPARTIC PROTEASE IN GUARD CELL 2 (ASPG2) from Arabidopsis thaliana (Mouse-ear cress).